A 229-amino-acid polypeptide reads, in one-letter code: 7-cyano-7-deazaguanine synthase (229 aa).

9–19 (YSGGLDSTTCM) serves as a coordination point for ATP. Zn(2+)-binding residues include Cys-189, Cys-199, Cys-202, and Cys-205.

This sequence belongs to the QueC family. Requires Zn(2+) as cofactor.

It catalyses the reaction 7-carboxy-7-deazaguanine + NH4(+) + ATP = 7-cyano-7-deazaguanine + ADP + phosphate + H2O + H(+). It functions in the pathway purine metabolism; 7-cyano-7-deazaguanine biosynthesis. Its function is as follows. Catalyzes the ATP-dependent conversion of 7-carboxy-7-deazaguanine (CDG) to 7-cyano-7-deazaguanine (preQ(0)). The protein is 7-cyano-7-deazaguanine synthase of Geotalea daltonii (strain DSM 22248 / JCM 15807 / FRC-32) (Geobacter daltonii).